We begin with the raw amino-acid sequence, 844 residues long: DNA mismatch repair protein MutS (844 aa).

610–617 provides a ligand contact to ATP; it reads GPNMGGKS.

Belongs to the DNA mismatch repair MutS family.

Functionally, this protein is involved in the repair of mismatches in DNA. It is possible that it carries out the mismatch recognition step. This protein has a weak ATPase activity. In Francisella tularensis subsp. mediasiatica (strain FSC147), this protein is DNA mismatch repair protein MutS.